We begin with the raw amino-acid sequence, 387 residues long: S-adenosylmethionine synthase (387 aa).

Glu8 provides a ligand contact to Mg(2+). His14 provides a ligand contact to ATP. Residue Glu42 participates in K(+) binding. L-methionine-binding residues include Glu55 and Gln98. ATP-binding positions include 166 to 168 (DGK), 234 to 237 (SGRF), Asp245, 251 to 252 (RK), Ala268, Lys272, and Lys276. Asp245 contacts L-methionine. Lys276 is an L-methionine binding site.

This sequence belongs to the AdoMet synthase family. Homotetramer. The cofactor is Mn(2+). Requires Mg(2+) as cofactor. It depends on Co(2+) as a cofactor. K(+) serves as cofactor.

The protein localises to the cytoplasm. It carries out the reaction L-methionine + ATP + H2O = S-adenosyl-L-methionine + phosphate + diphosphate. It participates in amino-acid biosynthesis; S-adenosyl-L-methionine biosynthesis; S-adenosyl-L-methionine from L-methionine: step 1/1. In terms of biological role, catalyzes the formation of S-adenosylmethionine from methionine and ATP. The reaction comprises two steps that are both catalyzed by the same enzyme: formation of S-adenosylmethionine (AdoMet) and triphosphate, and subsequent hydrolysis of the triphosphate. In Ostreococcus lucimarinus (strain CCE9901), this protein is S-adenosylmethionine synthase (METK-1).